The chain runs to 32 residues: Zinc metalloproteinase/disintegrin-like CdtV1 (32 aa).

2 cysteine pairs are disulfide-bonded: C5-C14 and C7-C15.

This sequence belongs to the venom metalloproteinase (M12B) family. P-II subfamily. P-IIa sub-subfamily. In terms of assembly, monomer. As to expression, expressed by the venom gland.

It localises to the secreted. Snake venom metalloproteinase that impairs hemostasis in the envenomed animal. The protein is Zinc metalloproteinase/disintegrin-like CdtV1 of Crotalus durissus terrificus (South American rattlesnake).